The following is a 120-amino-acid chain: Immunoglobulin kappa variable 2D-26 (120 aa).

Residues 1 to 20 (MRLPAQLLGLLMLWVPGSSA) form the signal peptide. A framework-1 region spans residues 21–43 (EIVMTQTPLSLSITPGEQASMSC). Residues 21 to 120 (EIVMTQTPLS…YYCMQDAQDP (100 aa)) enclose the Ig-like domain. A disulfide bridge links C43 with C113. A complementarity-determining-1 region spans residues 44–59 (RSSQSLLHSDGYTYLY). Residues 60-74 (WFLQKARPVSTLLIY) form a framework-2 region. Residues 75–81 (EVSNRFS) form a complementarity-determining-2 region. Positions 82-113 (GVPDRFSGSGSGTDFTLKISRVEAEDFGVYYC) are framework-3. Positions 114–120 (MQDAQDP) are complementarity-determining-3.

As to quaternary structure, immunoglobulins are composed of two identical heavy chains and two identical light chains; disulfide-linked.

It is found in the secreted. It localises to the cell membrane. V region of the variable domain of immunoglobulin light chains that participates in the antigen recognition. Immunoglobulins, also known as antibodies, are membrane-bound or secreted glycoproteins produced by B lymphocytes. In the recognition phase of humoral immunity, the membrane-bound immunoglobulins serve as receptors which, upon binding of a specific antigen, trigger the clonal expansion and differentiation of B lymphocytes into immunoglobulins-secreting plasma cells. Secreted immunoglobulins mediate the effector phase of humoral immunity, which results in the elimination of bound antigens. The antigen binding site is formed by the variable domain of one heavy chain, together with that of its associated light chain. Thus, each immunoglobulin has two antigen binding sites with remarkable affinity for a particular antigen. The variable domains are assembled by a process called V-(D)-J rearrangement and can then be subjected to somatic hypermutations which, after exposure to antigen and selection, allow affinity maturation for a particular antigen. The sequence is that of Immunoglobulin kappa variable 2D-26 from Homo sapiens (Human).